Here is a 93-residue protein sequence, read N- to C-terminus: MYKLEKAQAKQVVGGLSFWTFSAGLIMIVNALTGVAHAVNDIFQSTTANANGSDDDNENKNNSYRSKSNYFNTARFKLGLTPGSSSYSFPVFS.

A helical transmembrane segment spans residues 12-32; it reads VVGGLSFWTFSAGLIMIVNAL. Residues 47–66 are disordered; it reads TANANGSDDDNENKNNSYRS.

The protein localises to the cell membrane. This is an uncharacterized protein from Mycoplasma genitalium (strain ATCC 33530 / DSM 19775 / NCTC 10195 / G37) (Mycoplasmoides genitalium).